The primary structure comprises 524 residues: Origin of replication complex subunit 5 (524 aa).

Low complexity predominate over residues 1–19 (MSQPVTPRRTTRSSASASP). Residues 1–56 (MSQPVTPRRTTRSSASASPSPAPASPTSPPKSRPKPSPRRQLLAAAAAPPKEDGSS) form a disordered region. Over residues 20-31 (SPAPASPTSPPK) the composition is skewed to pro residues. A compositionally biased stretch (low complexity) spans 39 to 49 (RRQLLAAAAAP). 90–97 (GGAATGKT) contributes to the ATP binding site.

Belongs to the ORC5 family. As to quaternary structure, component of the origin recognition complex (ORC) composed of at least ORC1, ORC2, ORC3, ORC4, ORC5 and ORC6. ORC is regulated in a cell-cycle and development dependent manner. It is sequentially assembled at the exit from anaphase of mitosis and disassembled as cells enter S phase.

The protein localises to the nucleus. Its function is as follows. Component of the origin recognition complex (ORC) that binds origins of replication. DNA-binding is ATP-dependent. The specific DNA sequences that define origins of replication have not been identified yet. ORC is required to assemble the pre-replication complex necessary to initiate DNA replication. This Oryza sativa subsp. indica (Rice) protein is Origin of replication complex subunit 5.